Here is a 68-residue protein sequence, read N- to C-terminus: Peptide Hp1412 (68 aa).

A signal peptide spans 1-23; sequence MKTHFAIFLITLFLFQMFSQSDA. Residue C36 is modified to Cysteine amide. Positions 40–68 are excised as a propeptide; it reads GLSDLYDLDEMFDGEISQADIDFLKELMR.

The protein belongs to the non-disulfide-bridged peptide (NDBP) superfamily. Short antimicrobial peptide (group 4) family. As to expression, expressed by the venom gland.

The protein localises to the secreted. Its subcellular location is the target cell membrane. Its function is as follows. Amphipathic peptide with antimicrobial activity. This chain is Peptide Hp1412, found in Heterometrus petersii (Asian forest scorpion).